The primary structure comprises 433 residues: Enolase (433 aa).

Position 164 (glutamine 164) interacts with (2R)-2-phosphoglycerate. The Proton donor role is filled by glutamate 206. The Mg(2+) site is built by aspartate 243, glutamate 289, and aspartate 316. (2R)-2-phosphoglycerate is bound by residues lysine 341, arginine 370, serine 371, and lysine 392. Lysine 341 functions as the Proton acceptor in the catalytic mechanism.

The protein belongs to the enolase family. Mg(2+) is required as a cofactor.

The protein localises to the cytoplasm. It localises to the secreted. It is found in the cell surface. It catalyses the reaction (2R)-2-phosphoglycerate = phosphoenolpyruvate + H2O. The protein operates within carbohydrate degradation; glycolysis; pyruvate from D-glyceraldehyde 3-phosphate: step 4/5. Its function is as follows. Catalyzes the reversible conversion of 2-phosphoglycerate (2-PG) into phosphoenolpyruvate (PEP). It is essential for the degradation of carbohydrates via glycolysis. The polypeptide is Enolase (Borreliella burgdorferi (strain ATCC 35210 / DSM 4680 / CIP 102532 / B31) (Borrelia burgdorferi)).